The primary structure comprises 627 residues: Plastin-3 (627 aa).

EF-hand domains are found at residues 8–43 (EELE…ANLP) and 48–83 (KVRE…LKSG). Ca(2+)-binding residues include D21, N23, N25, E32, D61, N63, D65, M67, and E72. 2 actin-binding regions span residues 105-378 (TSEL…ALTK) and 379-624 (PENQ…GRGM). Calponin-homology (CH) domains follow at residues 119–235 (EEER…KIGL), 263–374 (LSPE…NKYP), 393–503 (TREE…RRYT), and 515–624 (KVND…GRGM).

The protein localises to the cytoplasm. Its function is as follows. Actin-bundling protein. The chain is Plastin-3 (pls3) from Danio rerio (Zebrafish).